The following is a 1012-amino-acid chain: Ubiquitin-activating enzyme E1 1 (1012 aa).

Arg-22 is an ATP binding site. Residue Ser-264 is modified to Phosphoserine. The ATP site is built by Ala-437 and Asp-463. Mg(2+)-binding residues include Asp-465 and Glu-468. Asn-471, Arg-474, Lys-487, Val-513, Asp-537, and Asn-538 together coordinate ATP. Asp-537 is a binding site for Mg(2+). Lys-588 is covalently cross-linked (Glycyl lysine isopeptide (Lys-Gly) (interchain with G-Cter in ubiquitin)). Residue Cys-593 is the Glycyl thioester intermediate of the active site. Ser-903 carries the post-translational modification Phosphoserine.

This sequence belongs to the ubiquitin-activating E1 family. Monomer. Interacts with the E2 ubiquitin-conjugating enzyme ubc4.

It localises to the cytoplasm. Its subcellular location is the nucleus. It catalyses the reaction ATP + ubiquitin + [E1 ubiquitin-activating enzyme]-L-cysteine = AMP + diphosphate + S-ubiquitinyl-[E1 ubiquitin-activating enzyme]-L-cysteine.. It functions in the pathway protein modification; protein ubiquitination. With respect to regulation, ubiquitin transfer between the E1 ubiquitin-activating enzyme ptr3 and E2 ubiquitin-conjugating enzyme ubc4 is enhanced by the presence of magnesium and ATP, or adenylated ubiquitin. Functionally, E1 ubiquitin-activating enzyme that catalyzes the first step in ubiquitin conjugation to mark cellular proteins for degradation through the ubiquitin-proteasome system. Activates ubiquitin by first adenylating its C-terminal glycine residue with ATP, and thereafter linking this residue to the side chain of a cysteine residue in E1, yielding a ubiquitin-E1 thioester and free AMP. This is Ubiquitin-activating enzyme E1 1 (ptr3) from Schizosaccharomyces pombe (strain 972 / ATCC 24843) (Fission yeast).